An 874-amino-acid polypeptide reads, in one-letter code: Alanine--tRNA ligase (874 aa).

Residues His564, His568, Cys665, and His669 each coordinate Zn(2+).

This sequence belongs to the class-II aminoacyl-tRNA synthetase family. It depends on Zn(2+) as a cofactor.

The protein resides in the cytoplasm. The enzyme catalyses tRNA(Ala) + L-alanine + ATP = L-alanyl-tRNA(Ala) + AMP + diphosphate. Functionally, catalyzes the attachment of alanine to tRNA(Ala) in a two-step reaction: alanine is first activated by ATP to form Ala-AMP and then transferred to the acceptor end of tRNA(Ala). Also edits incorrectly charged Ser-tRNA(Ala) and Gly-tRNA(Ala) via its editing domain. The sequence is that of Alanine--tRNA ligase from Paraburkholderia phytofirmans (strain DSM 17436 / LMG 22146 / PsJN) (Burkholderia phytofirmans).